The following is a 677-amino-acid chain: UvrABC system protein B (677 aa).

The region spanning 27–414 (ANLGHGVRDQ…SQGVIAEQII (388 aa)) is the Helicase ATP-binding domain. 40–47 (GVTGSGKT) provides a ligand contact to ATP. The Beta-hairpin motif lies at 93 to 116 (YYDYYQPEAYVPASDTYIEKDSSI). A Helicase C-terminal domain is found at 432-594 (QVDDLLAECR…IEPRTIRKSL (163 aa)). The UVR domain occupies 638-673 (AKHIQKLEREMREAAKELEFERAATLRDRIRLLRER).

It belongs to the UvrB family. As to quaternary structure, forms a heterotetramer with UvrA during the search for lesions. Interacts with UvrC in an incision complex.

It localises to the cytoplasm. The UvrABC repair system catalyzes the recognition and processing of DNA lesions. A damage recognition complex composed of 2 UvrA and 2 UvrB subunits scans DNA for abnormalities. Upon binding of the UvrA(2)B(2) complex to a putative damaged site, the DNA wraps around one UvrB monomer. DNA wrap is dependent on ATP binding by UvrB and probably causes local melting of the DNA helix, facilitating insertion of UvrB beta-hairpin between the DNA strands. Then UvrB probes one DNA strand for the presence of a lesion. If a lesion is found the UvrA subunits dissociate and the UvrB-DNA preincision complex is formed. This complex is subsequently bound by UvrC and the second UvrB is released. If no lesion is found, the DNA wraps around the other UvrB subunit that will check the other stand for damage. In Nitratidesulfovibrio vulgaris (strain ATCC 29579 / DSM 644 / CCUG 34227 / NCIMB 8303 / VKM B-1760 / Hildenborough) (Desulfovibrio vulgaris), this protein is UvrABC system protein B.